A 255-amino-acid polypeptide reads, in one-letter code: S-adenosyl-L-methionine-dependent uroporphyrinogen III methyltransferase (255 aa).

S-adenosyl-L-homocysteine is bound by residues Pro-15, 91 to 93 (GGD), 121 to 122 (TS), Met-175, and Ala-232.

The protein belongs to the precorrin methyltransferase family. Homodimer.

It catalyses the reaction uroporphyrinogen III + 2 S-adenosyl-L-methionine = precorrin-2 + 2 S-adenosyl-L-homocysteine + H(+). It participates in porphyrin-containing compound metabolism; siroheme biosynthesis; precorrin-2 from uroporphyrinogen III: step 1/1. Functionally, involved in the archaeal biosynthesis of heme. Catalyzes the methylation of carbons 2 and 7 of uroporphyrinogen-III (UROGEN) to yield precorrin-2. It does not catalyze the overmethylation of precorrin-2 to trimethylpyrrocorphin. The chain is S-adenosyl-L-methionine-dependent uroporphyrinogen III methyltransferase from Methanosarcina barkeri (strain Fusaro / DSM 804).